Reading from the N-terminus, the 311-residue chain is HPr kinase/phosphorylase (311 aa).

Active-site residues include His138 and Lys159. An ATP-binding site is contributed by 153–160; sequence GDSGIGKS. Position 160 (Ser160) interacts with Mg(2+). Residue Asp177 is the Proton acceptor; for phosphorylation activity. Proton donor; for dephosphorylation activity of the active site. An important for the catalytic mechanism of both phosphorylation and dephosphorylation region spans residues 201–210; sequence IEIRGVGIID. Residue Glu202 participates in Mg(2+) binding. The active site involves Arg243. Positions 264 to 269 are important for the catalytic mechanism of dephosphorylation; the sequence is PVKTGR.

It belongs to the HPrK/P family. Homohexamer. Mg(2+) is required as a cofactor.

It catalyses the reaction [HPr protein]-L-serine + ATP = [HPr protein]-O-phospho-L-serine + ADP + H(+). The catalysed reaction is [HPr protein]-O-phospho-L-serine + phosphate + H(+) = [HPr protein]-L-serine + diphosphate. Its function is as follows. Catalyzes the ATP- as well as the pyrophosphate-dependent phosphorylation of a specific serine residue in HPr, a phosphocarrier protein of the phosphoenolpyruvate-dependent sugar phosphotransferase system (PTS). HprK/P also catalyzes the pyrophosphate-producing, inorganic phosphate-dependent dephosphorylation (phosphorolysis) of seryl-phosphorylated HPr (P-Ser-HPr). The two antagonistic activities of HprK/P are regulated by several intracellular metabolites, which change their concentration in response to the absence or presence of rapidly metabolisable carbon sources (glucose, fructose, etc.) in the growth medium. Therefore, by controlling the phosphorylation state of HPr, HPrK/P is a sensor enzyme that plays a major role in the regulation of carbon metabolism and sugar transport: it mediates carbon catabolite repression (CCR), and regulates PTS-catalyzed carbohydrate uptake and inducer exclusion. This Streptococcus pneumoniae (strain 70585) protein is HPr kinase/phosphorylase.